The chain runs to 155 residues: Small ribosomal subunit protein uS15 (155 aa).

A compositionally biased stretch (basic residues) spans 1-10 (MARMHTRRRG). Residues 1–66 (MARMHTRRRG…EGVQGTPVPD (66 aa)) form a disordered region. The segment covering 21 to 33 (EPPEWSDVDEDAI) has biased composition (acidic residues). Basic and acidic residues predominate over residues 34-45 (EERVVELAEQGH).

The protein belongs to the universal ribosomal protein uS15 family. In terms of assembly, part of the 30S ribosomal subunit.

The chain is Small ribosomal subunit protein uS15 from Halobacterium salinarum (strain ATCC 700922 / JCM 11081 / NRC-1) (Halobacterium halobium).